We begin with the raw amino-acid sequence, 189 residues long: Holliday junction branch migration complex subunit RuvA (189 aa).

Residues 1 to 63 (MIYAMYGVLE…DDEISLYGFS (63 aa)) are domain I. The interval 64 to 135 (DVLKLKLFEK…ELKDSMKEFD (72 aa)) is domain II. A flexible linker region spans residues 135–139 (DVTLT). Residues 140–189 (EKDKKILEAIEALVTLGFSRNQSKKAVTQILKKDDSLDDIIKKALKFLSR) are domain III.

It belongs to the RuvA family. In terms of assembly, homotetramer. Forms an RuvA(8)-RuvB(12)-Holliday junction (HJ) complex. HJ DNA is sandwiched between 2 RuvA tetramers; dsDNA enters through RuvA and exits via RuvB. An RuvB hexamer assembles on each DNA strand where it exits the tetramer. Each RuvB hexamer is contacted by two RuvA subunits (via domain III) on 2 adjacent RuvB subunits; this complex drives branch migration. In the full resolvosome a probable DNA-RuvA(4)-RuvB(12)-RuvC(2) complex forms which resolves the HJ.

Its subcellular location is the cytoplasm. In terms of biological role, the RuvA-RuvB-RuvC complex processes Holliday junction (HJ) DNA during genetic recombination and DNA repair, while the RuvA-RuvB complex plays an important role in the rescue of blocked DNA replication forks via replication fork reversal (RFR). RuvA specifically binds to HJ cruciform DNA, conferring on it an open structure. The RuvB hexamer acts as an ATP-dependent pump, pulling dsDNA into and through the RuvAB complex. HJ branch migration allows RuvC to scan DNA until it finds its consensus sequence, where it cleaves and resolves the cruciform DNA. In Thermosipho melanesiensis (strain DSM 12029 / CIP 104789 / BI429), this protein is Holliday junction branch migration complex subunit RuvA.